The primary structure comprises 331 residues: Protein-methionine-sulfoxide reductase catalytic subunit MsrP (331 aa).

A signal peptide (tat-type signal) is located at residues 1–54 (MLIKTDRWLRGDDIPASEITPQHLFDQRRRLLAAAALGAAGAALSPWAARRAFA). Mo-molybdopterin-binding positions include N86, 89–90 (YE), C144, S179, N227, R232, and 243–245 (SAK).

It belongs to the MsrP family. In terms of assembly, heterodimer of a catalytic subunit (MsrP) and a heme-binding subunit (MsrQ). Requires Mo-molybdopterin as cofactor. In terms of processing, predicted to be exported by the Tat system. The position of the signal peptide cleavage has not been experimentally proven.

The protein localises to the periplasm. It catalyses the reaction L-methionyl-[protein] + a quinone + H2O = L-methionyl-(S)-S-oxide-[protein] + a quinol. The enzyme catalyses L-methionyl-[protein] + a quinone + H2O = L-methionyl-(R)-S-oxide-[protein] + a quinol. Part of the MsrPQ system that repairs oxidized periplasmic proteins containing methionine sulfoxide residues (Met-O), using respiratory chain electrons. Thus protects these proteins from oxidative-stress damage caused by reactive species of oxygen and chlorine generated by the host defense mechanisms. MsrPQ is essential for the maintenance of envelope integrity under bleach stress, rescuing a wide series of structurally unrelated periplasmic proteins from methionine oxidation. The catalytic subunit MsrP is non-stereospecific, being able to reduce both (R-) and (S-) diastereoisomers of methionine sulfoxide. The sequence is that of Protein-methionine-sulfoxide reductase catalytic subunit MsrP from Ralstonia nicotianae (strain ATCC BAA-1114 / GMI1000) (Ralstonia solanacearum).